Here is a 411-residue protein sequence, read N- to C-terminus: Carbohydrate sulfotransferase 5 (411 aa).

Topologically, residues Met1 to Lys30 are cytoplasmic. The chain crosses the membrane as a helical; Signal-anchor for type II membrane protein span at residues Thr31–Ile48. The Lumenal segment spans residues Ser49 to Asp411. Trp71–Phe77 contacts 3'-phosphoadenylyl sulfate. The N-linked (GlcNAc...) asparagine glycan is linked to Asn138. Residue Arg224–Ser232 coordinates 3'-phosphoadenylyl sulfate. Residues Asn327 and Asn350 are each glycosylated (N-linked (GlcNAc...) asparagine).

It belongs to the sulfotransferase 1 family. Gal/GlcNAc/GalNAc subfamily. As to expression, predominantly expressed in small and large intestines and colon. Weakly expressed in lymphocytes. Not expressed in other tissues. Down-regulated in colonic adenocarcinomas.

It is found in the golgi apparatus membrane. Functionally, sulfotransferase that utilizes 3'-phospho-5'-adenylyl sulfate (PAPS) as sulfonate donor to catalyze the transfer of sulfate to position 6 of non-reducing N-acetylglucosamine (GlcNAc) residues and O-linked sugars of mucin-type acceptors. Acts on the non-reducing terminal GlcNAc of short carbohydrate substrates. However, it does not transfer sulfate to longer carbohydrate substrates that have poly-N-acetyllactosamine structures. Has no activity toward keratan. Not involved in generating HEV-expressed ligands for SELL. Its substrate specificity may be influenced by its subcellular location. This chain is Carbohydrate sulfotransferase 5 (CHST5), found in Homo sapiens (Human).